The chain runs to 67 residues: Large ribosomal subunit protein uL29 (67 aa).

This sequence belongs to the universal ribosomal protein uL29 family.

In Sulfurihydrogenibium sp. (strain YO3AOP1), this protein is Large ribosomal subunit protein uL29.